We begin with the raw amino-acid sequence, 945 residues long: Xylanolytic transcriptional activator xlnR (945 aa).

Disordered stretches follow at residues 1 to 33 (MSTPSIPQFPSPFSPFSSGSQSTGMAPSQTVGL) and 53 to 74 (AAGTGAGDGATSTSLRNSMSHA). Residues 14 to 24 (SPFSSGSQSTG) show a composition bias toward low complexity. A DNA-binding region (zn(2)-C6 fungal-type) is located at residues 125 to 151 (CDQCNQLRTKCDGQHPCAHCIEFGLTC). 2 disordered regions span residues 172 to 251 (AAAA…PSLG) and 559 to 601 (PPNV…INVT). Polar residues-rich tracts occupy residues 177-188 (HGSNGHSGQANA) and 218-251 (ISSQPSHMQHANNAGISGLHDSQTAPSHSQPSLG). Residues 565–581 (ARQDGERDGDGEADRRH) show a composition bias toward basic and acidic residues.

Belongs to the xlnR/xlr1 family.

It localises to the nucleus. Its function is as follows. Transcriptional activator of the xylanolytic system. Involved in the regulation of extracellular cellulolytic and xylanolytic genes and in the regulation of the intracellular activities of D-xylose catabolic genes in the pentose catabolic pathway (PCP) in response to the presence of D-xylose. This Aspergillus kawachii (White koji mold) protein is Xylanolytic transcriptional activator xlnR (xlnR).